The primary structure comprises 308 residues: Sulfoquinovosyl glycerol transport system permease protein SmoG (308 aa).

The next 6 helical transmembrane spans lie at 28–48 (LAVL…VYPV), 92–112 (VLIT…LALL), 126–146 (SLLI…AWFF), 164–184 (GIIW…TIIW), 223–243 (ITLP…TITA), and 279–299 (LGYG…VTAV). Residues 88–300 (TWNTVLITLI…ALSMCVTAVY (213 aa)) enclose the ABC transmembrane type-1 domain.

Belongs to the binding-protein-dependent transport system permease family. As to quaternary structure, the complex is probably composed of two ATP-binding proteins (SmoE), two transmembrane proteins (SmoG and SmoH) and a solute-binding protein (SmoF).

It is found in the cell inner membrane. Functionally, part of the ABC transporter complex SmoEFGH involved in sulfoquinovosyl glycerol (SQGro) uptake. Responsible for the translocation of the substrate across the membrane. The polypeptide is Sulfoquinovosyl glycerol transport system permease protein SmoG (Agrobacterium fabrum (strain C58 / ATCC 33970) (Agrobacterium tumefaciens (strain C58))).